Reading from the N-terminus, the 908-residue chain is NADH-quinone oxidoreductase subunit G (908 aa).

Residues 2 to 83 (ATIHVDGKEY…GTFISIDDEE (82 aa)) form the 2Fe-2S ferredoxin-type domain. 4 residues coordinate [2Fe-2S] cluster: Cys-34, Cys-45, Cys-48, and Cys-67. A 4Fe-4S His(Cys)3-ligated-type domain is found at 83–122 (EAKQFRESVVEWLMTNHPHDCPVCEEGGNCHLQDMTVMTG). [4Fe-4S] cluster contacts are provided by His-99, Cys-103, Cys-106, Cys-112, Cys-151, Cys-154, Cys-157, Cys-201, Cys-228, Cys-231, Cys-235, and Cys-263. The region spanning 221-277 (MQFAPSICQQCSIGCNISPGERYGELRRIENRYNGTVNHYFLCDRGRFGYGYVNLKD) is the 4Fe-4S Mo/W bis-MGD-type domain.

It belongs to the complex I 75 kDa subunit family. As to quaternary structure, composed of 13 different subunits. Subunits NuoCD, E, F, and G constitute the peripheral sector of the complex. The cofactor is [2Fe-2S] cluster. Requires [4Fe-4S] cluster as cofactor.

It catalyses the reaction a quinone + NADH + 5 H(+)(in) = a quinol + NAD(+) + 4 H(+)(out). NDH-1 shuttles electrons from NADH, via FMN and iron-sulfur (Fe-S) centers, to quinones in the respiratory chain. The immediate electron acceptor for the enzyme in this species is believed to be ubiquinone. Couples the redox reaction to proton translocation (for every two electrons transferred, four hydrogen ions are translocated across the cytoplasmic membrane), and thus conserves the redox energy in a proton gradient. The protein is NADH-quinone oxidoreductase subunit G (nuoG) of Shigella flexneri.